The following is a 144-amino-acid chain: HTH-type transcriptional repressor NsrR (144 aa).

The HTH rrf2-type domain occupies 2 to 129 (QLTSFTDYGL…DKHTLLSLID (128 aa)). Residues 28 to 51 (ISKVTEVYGVSRNHMVKIINKLGQ) constitute a DNA-binding region (H-T-H motif). [2Fe-2S] cluster contacts are provided by Cys91, Cys96, and Cys102.

It depends on [2Fe-2S] cluster as a cofactor.

Its function is as follows. Nitric oxide-sensitive repressor of genes involved in protecting the cell against nitrosative stress. May require iron for activity. The polypeptide is HTH-type transcriptional repressor NsrR (Photobacterium profundum (strain SS9)).